The primary structure comprises 370 residues: Vasopressin V2 receptor (370 aa).

Positions M1 to G21 are enriched in polar residues. The tract at residues M1–G26 is disordered. Over M1–Q38 the chain is Extracellular. N22 carries N-linked (GlcNAc...) asparagine glycosylation. A helical membrane pass occupies residues A39 to V63. Residues R64–F77 lie on the Cytoplasmic side of the membrane. A helical membrane pass occupies residues I78 to A98. Residues W99–R113 lie on the Extracellular side of the membrane. A helical membrane pass occupies residues A114–L135. The Cytoplasmic portion of the chain corresponds to D136–P159. Residues V160 to Q180 traverse the membrane as a helical segment. Residues R181–W199 are Extracellular-facing. Residues G200–G219 form a helical membrane-spanning segment. At I220–K270 the chain is on the cytoplasmic side. A helical transmembrane segment spans residues M271 to W292. The Extracellular portion of the chain corresponds to A293–V307. A helical membrane pass occupies residues L308–F327. Residues S328–S370 are Cytoplasmic-facing. S-palmitoyl cysteine attachment occurs at residues C340 and C341. The disordered stretch occupies residues P347–S370.

The protein belongs to the G-protein coupled receptor 1 family. Vasopressin/oxytocin receptor subfamily. Interacts with ARRDC4. Identified in a complex containing at least ARRDC4, V2R and HGS. Interacts with TMEM147.

It is found in the cell membrane. Its function is as follows. Receptor for arginine vasopressin. The activity of this receptor is mediated by G proteins which activate adenylate cyclase. Involved in renal water reabsorption. The sequence is that of Vasopressin V2 receptor (AVPR2) from Bos taurus (Bovine).